The sequence spans 327 residues: uncharacterized protein (327 aa).

At 1-19 the chain is on the cytoplasmic side; sequence MSIAQDRGIVFKLLSIYRA. A helical membrane pass occupies residues 20-40; it reads AAGIFMALAQLIVIFFGYCDF. Over 41–51 the chain is Extracellular; that stretch reads KIKGYRIASYN. A helical membrane pass occupies residues 52 to 72; it reads APTFASSFIILAVCLLLVVVL. Over 73–104 the chain is Cytoplasmic; it reads ENPEVKVTNSENSLFSALKQFFRVERKKLISC. The chain crosses the membrane as a helical span at residues 105 to 125; sequence LILLWSMFLSSFIMSEVVYFM. The Extracellular segment spans residues 126–141; sequence PLFLTLHVNWDTKFQG. Residues 142 to 162 form a helical membrane-spanning segment; it reads IAFMVASILGVTGSYFAPKLI. Topologically, residues 163–199 are cytoplasmic; sequence NVGCSCGRAKDGGLEESDTTGSETVEVKKKDSLYSGQ. The chain crosses the membrane as a helical span at residues 200-220; that stretch reads VFLSIFALFVSLLGQAFMIGA. Residues 221 to 235 are Extracellular-facing; sequence SEALKHKSMPPTNSG. A helical membrane pass occupies residues 236-256; that stretch reads IFFSAGMSITLLGYNFLASSI. Residues 257–275 are Cytoplasmic-facing; the sequence is PALFSMYIDPKLKVQLMPS. The helical transmembrane segment at 276–296 threads the bilayer; it reads IGAISGIGKLVAPIVLAALYG. Residues 297–300 are Extracellular-facing; that stretch reads TRLG. The helical transmembrane segment at 301–321 threads the bilayer; it reads LSIAVGFGMILVAVSIPPLIW. Residues 322–327 are Cytoplasmic-facing; that stretch reads LRKKRC.

Its subcellular location is the membrane. This is an uncharacterized protein from Saccharomyces cerevisiae (strain ATCC 204508 / S288c) (Baker's yeast).